Reading from the N-terminus, the 285-residue chain is Chitinase 4 (285 aa).

Residues 1 to 27 (MAAKMATMVALVFGLALLLSAAAPAAA) form the signal peptide. A Chitin-binding type-1 domain is found at 28-62 (QNCGCQDGYCCSQWGYCGTTEAYCGQGCQSGPCWG). Cystine bridges form between Cys30–Cys38, Cys32–Cys44, Cys37–Cys51, Cys55–Cys60, Cys104–Cys153, Cys166–Cys175, and Cys253–Cys285. Glu148 acts as the Proton donor in catalysis.

The protein belongs to the glycosyl hydrolase 19 family. Chitinase class IV subfamily. Expressed at low levels in leaves, sheaths and meristems.

The catalysed reaction is Random endo-hydrolysis of N-acetyl-beta-D-glucosaminide (1-&gt;4)-beta-linkages in chitin and chitodextrins.. Its function is as follows. Hydrolyzes chitin and may function in reproductive organs during embryogenesis and seed maturation. The chain is Chitinase 4 (Cht4) from Oryza sativa subsp. japonica (Rice).